Here is a 417-residue protein sequence, read N- to C-terminus: Phosphoglycerate kinase (417 aa).

Residues Val23, Asp24, Phe25, Asn26, Gln39, Arg40, Ser63, His64, Gly66, Arg67, Leu122, Arg123, His170, and Arg171 each coordinate (2R)-3-phosphoglycerate. Position 214 (Gly214) interacts with ADP. Gly214 contacts CDP. The AMP site is built by Ala215 and Lys216. An ATP-binding site is contributed by Ala215. A Mg(2+)-binding site is contributed by Ala215. Asp219 is a CDP binding site. Mg(2+) is bound at residue Asp219. Lys220 provides a ligand contact to AMP. Position 220 (Lys220) interacts with ATP. An ADP-binding site is contributed by Gly238. Position 238 (Gly238) interacts with CDP. Gly239 and Gly313 together coordinate AMP. Gly239 and Gly313 together coordinate ATP. 3 residues coordinate CDP: Gly338, Ala340, and Phe343. Phe343 serves as a coordination point for ADP. Position 344 (Glu344) interacts with AMP. Glu344, Asp375, and Thr376 together coordinate ATP. Asp375 serves as a coordination point for Mg(2+).

The protein belongs to the phosphoglycerate kinase family. In terms of assembly, monomer. Mg(2+) serves as cofactor.

Its subcellular location is the cytoplasm. The protein localises to the mitochondrion. It carries out the reaction (2R)-3-phosphoglycerate + ATP = (2R)-3-phospho-glyceroyl phosphate + ADP. Its pathway is carbohydrate degradation; glycolysis; pyruvate from D-glyceraldehyde 3-phosphate: step 2/5. Its function is as follows. Catalyzes one of the two ATP producing reactions in the glycolytic pathway via the reversible conversion of 1,3-diphosphoglycerate to 3-phosphoglycerate. Both L- and D- forms of purine and pyrimidine nucleotides can be used as substrates, but the activity is much lower on pyrimidines. Negatively regulates the biosynthesis of acetyl-CoA from pyruvate in the mitochondrion. This chain is Phosphoglycerate kinase (pgk1), found in Hypocrea rufa (Trichoderma viride).